Reading from the N-terminus, the 464-residue chain is ATP synthase subunit beta (464 aa).

152 to 159 (GGAGVGKT) is an ATP binding site.

It belongs to the ATPase alpha/beta chains family. In terms of assembly, F-type ATPases have 2 components, CF(1) - the catalytic core - and CF(0) - the membrane proton channel. CF(1) has five subunits: alpha(3), beta(3), gamma(1), delta(1), epsilon(1). CF(0) has three main subunits: a(1), b(2) and c(9-12). The alpha and beta chains form an alternating ring which encloses part of the gamma chain. CF(1) is attached to CF(0) by a central stalk formed by the gamma and epsilon chains, while a peripheral stalk is formed by the delta and b chains.

The protein localises to the cell membrane. It catalyses the reaction ATP + H2O + 4 H(+)(in) = ADP + phosphate + 5 H(+)(out). Functionally, produces ATP from ADP in the presence of a proton gradient across the membrane. The catalytic sites are hosted primarily by the beta subunits. In Clostridioides difficile (strain 630) (Peptoclostridium difficile), this protein is ATP synthase subunit beta.